A 673-amino-acid polypeptide reads, in one-letter code: UvrABC system protein B (673 aa).

Positions 26-414 constitute a Helicase ATP-binding domain; the sequence is EGLEDGLAHQ…GGDVVDQVVR (389 aa). 39 to 46 is an ATP binding site; sequence GVTGSGKT. The Beta-hairpin motif lies at 92-115; sequence YYDYYQPEAYVPSSDTFIEKDASV. Positions 431–597 constitute a Helicase C-terminal domain; the sequence is QVDDLLSEIR…GLNKKVVDIL (167 aa). Residues 633–668 form the UVR domain; it reads QQKIHELEGLMMQHAQNLEFEEAAQIRDQLHQLREL.

The protein belongs to the UvrB family. In terms of assembly, forms a heterotetramer with UvrA during the search for lesions. Interacts with UvrC in an incision complex.

The protein resides in the cytoplasm. Functionally, the UvrABC repair system catalyzes the recognition and processing of DNA lesions. A damage recognition complex composed of 2 UvrA and 2 UvrB subunits scans DNA for abnormalities. Upon binding of the UvrA(2)B(2) complex to a putative damaged site, the DNA wraps around one UvrB monomer. DNA wrap is dependent on ATP binding by UvrB and probably causes local melting of the DNA helix, facilitating insertion of UvrB beta-hairpin between the DNA strands. Then UvrB probes one DNA strand for the presence of a lesion. If a lesion is found the UvrA subunits dissociate and the UvrB-DNA preincision complex is formed. This complex is subsequently bound by UvrC and the second UvrB is released. If no lesion is found, the DNA wraps around the other UvrB subunit that will check the other stand for damage. This chain is UvrABC system protein B, found in Shigella flexneri.